The chain runs to 451 residues: DNA polymerase delta subunit 3 (451 aa).

Disordered stretches follow at residues 187-241 (SQAK…AASS), 259-386 (KQTP…KVLR), and 404-451 (AWES…FAKK). A compositionally biased stretch (polar residues) spans 200 to 216 (PSTSQVKEAPKASQTVE). The segment covering 225–241 (SAPAKKGSSAPKSAASS) has biased composition (low complexity). Basic and acidic residues predominate over residues 306-316 (QREEELRRMME). A compositionally biased stretch (acidic residues) spans 329–353 (EEEEEEEEEEESEHEQLPAEEEPMA). Residues 354–366 (EEPKAPEPVKEEP) are compositionally biased toward basic and acidic residues. The span at 376 to 386 (GRRRGKRKVLR) shows a compositional bias: basic residues. Positions 441–448 (QGSIMSWF) match the PIP-box motif.

In terms of assembly, component of the DNA polymerase delta complex which consists of PolD1, PolD2, PolD3 and PolD4, with PolD1 bearing DNA polymerase and 3' to 5' proofreading exonuclease activities. Directly interacts with PCNA.

It localises to the nucleus. Functionally, accessory component of the DNA polymerase delta complex. The complex is required for the maintenance of genome integrity, acting in concert with the sliding clamp processivity factor PCNA. The sequence is that of DNA polymerase delta subunit 3 from Chaetomium thermophilum (strain DSM 1495 / CBS 144.50 / IMI 039719) (Thermochaetoides thermophila).